The sequence spans 138 residues: MIVRTLEECRQSERRVVAENWESVRMLLKDDHMGFSFHITTIYANTQTHIHYRNHLESVYCMSGEGEIEVVGGKTYPIQPGTLYILDQHDEHYLRAFSSEMVMACVFNPPLTGHEIHDAEGVYPLDKSELISQCHKEK.

It belongs to the ectoine synthase family.

It catalyses the reaction (2S)-4-acetamido-2-aminobutanoate = L-ectoine + H2O. Its pathway is amine and polyamine biosynthesis; ectoine biosynthesis; L-ectoine from L-aspartate 4-semialdehyde: step 3/3. Its function is as follows. Catalyzes the circularization of gamma-N-acetyl-alpha,gamma-diaminobutyric acid (ADABA) to ectoine (1,4,5,6-tetrahydro-2-methyl-4-pyrimidine carboxylic acid), which is an excellent osmoprotectant. This chain is L-ectoine synthase, found in Vibrio cholerae serotype O1 (strain ATCC 39541 / Classical Ogawa 395 / O395).